The chain runs to 333 residues: Phenylalanine--tRNA ligase alpha subunit (333 aa).

Position 254 (glutamate 254) interacts with Mg(2+).

This sequence belongs to the class-II aminoacyl-tRNA synthetase family. Phe-tRNA synthetase alpha subunit type 1 subfamily. In terms of assembly, tetramer of two alpha and two beta subunits. It depends on Mg(2+) as a cofactor.

It localises to the cytoplasm. The catalysed reaction is tRNA(Phe) + L-phenylalanine + ATP = L-phenylalanyl-tRNA(Phe) + AMP + diphosphate + H(+). This chain is Phenylalanine--tRNA ligase alpha subunit, found in Xylella fastidiosa (strain M12).